A 217-amino-acid polypeptide reads, in one-letter code: Thiamine-phosphate synthase (217 aa).

4-amino-2-methyl-5-(diphosphooxymethyl)pyrimidine is bound by residues glutamine 39–lysine 43 and asparagine 71. The Mg(2+) site is built by aspartate 72 and aspartate 91. Threonine 110 contacts 4-amino-2-methyl-5-(diphosphooxymethyl)pyrimidine. Serine 137 to threonine 139 provides a ligand contact to 2-[(2R,5Z)-2-carboxy-4-methylthiazol-5(2H)-ylidene]ethyl phosphate. Residue lysine 140 coordinates 4-amino-2-methyl-5-(diphosphooxymethyl)pyrimidine. Residue glycine 167 coordinates 2-[(2R,5Z)-2-carboxy-4-methylthiazol-5(2H)-ylidene]ethyl phosphate.

This sequence belongs to the thiamine-phosphate synthase family. Mg(2+) serves as cofactor.

The catalysed reaction is 2-[(2R,5Z)-2-carboxy-4-methylthiazol-5(2H)-ylidene]ethyl phosphate + 4-amino-2-methyl-5-(diphosphooxymethyl)pyrimidine + 2 H(+) = thiamine phosphate + CO2 + diphosphate. The enzyme catalyses 2-(2-carboxy-4-methylthiazol-5-yl)ethyl phosphate + 4-amino-2-methyl-5-(diphosphooxymethyl)pyrimidine + 2 H(+) = thiamine phosphate + CO2 + diphosphate. It catalyses the reaction 4-methyl-5-(2-phosphooxyethyl)-thiazole + 4-amino-2-methyl-5-(diphosphooxymethyl)pyrimidine + H(+) = thiamine phosphate + diphosphate. It functions in the pathway cofactor biosynthesis; thiamine diphosphate biosynthesis; thiamine phosphate from 4-amino-2-methyl-5-diphosphomethylpyrimidine and 4-methyl-5-(2-phosphoethyl)-thiazole: step 1/1. Condenses 4-methyl-5-(beta-hydroxyethyl)thiazole monophosphate (THZ-P) and 2-methyl-4-amino-5-hydroxymethyl pyrimidine pyrophosphate (HMP-PP) to form thiamine monophosphate (TMP). The protein is Thiamine-phosphate synthase of Saccharophagus degradans (strain 2-40 / ATCC 43961 / DSM 17024).